A 1771-amino-acid polypeptide reads, in one-letter code: Kinase D-interacting substrate of 220 kDa (1771 aa).

The Cytoplasmic segment spans residues 1-499 (MSVLISQSVI…QIEPLFQFSW (499 aa)). ANK repeat units follow at residues 4 to 33 (LISQ…DVDE), 37 to 66 (CGQT…NCNL), 70 to 99 (DNWT…NLEH), 103 to 132 (GGWT…NPSV), 136 to 165 (YSVY…KVNC), 169 to 198 (YGTT…DVDQ), 202 to 231 (NSMT…NVNL), 235 to 264 (DGNT…YVNI), 268 to 297 (SGDT…DIDI), 301 to 330 (DNKT…DTEI), 334 to 363 (DGET…KVSA), and 367 to 396 (KGDT…DGRL). The KAP NTPase domain occupies 440–953 (YDLYSSALAD…NIVSVTGRLL (514 aa)). A helical membrane pass occupies residues 500 to 520 (LIVFLTLLLCGGLGLLFAFTV). Residues 521-524 (HPNL) lie on the Extracellular side of the membrane. The chain crosses the membrane as a helical span at residues 525–545 (GIAVSLSFLALLYIFFIVIYF). At 546–659 (GGRREGESWN…KWKKTCCLPS (114 aa)) the chain is on the cytoplasmic side. Residues 660–680 (FVIFLFIIGCIISGITLLAIF) form a helical membrane-spanning segment. At 681–685 (RVDPK) the chain is on the extracellular side. A helical transmembrane segment spans residues 686-706 (HLTVNAVLISIASVVGLAFVL). Residues 707–1771 (NCRTWWQVLD…GFGEERESIL (1065 aa)) are Cytoplasmic-facing. Residues serine 882 and serine 885 each carry the phosphoserine modification. Position 914 is a phosphothreonine (threonine 914). The residue at position 918 (serine 918) is a Phosphoserine. The tract at residues 1089 to 1092 (PRAP) is mediates interaction with CRKL. Serine 1163 is subject to Phosphoserine. Disordered stretches follow at residues 1182–1202 (DAAE…PAPG), 1285–1310 (PEDP…RASH), 1344–1368 (RHSN…SQDS), and 1397–1564 (LEGG…EPIR). Residues serine 1296, serine 1352, serine 1359, serine 1361, serine 1362, and serine 1365 each carry the phosphoserine modification. Positions 1346–1358 (SNLSWQSQTRRTP) are enriched in polar residues. Low complexity predominate over residues 1359–1368 (SLSSLNSQDS). Residues 1403–1430 (STTISGRSSPHSTYYMGQSSSGGSIHSN) are compositionally biased toward polar residues. Basic and acidic residues predominate over residues 1431 to 1457 (LEQEKGKDSEPKPDDGRKSFLMKRGDV). Over residues 1460 to 1470 (YSSSGVSTNDA) the composition is skewed to polar residues. 4 positions are modified to phosphoserine: serine 1521, serine 1526, serine 1555, and serine 1574. A compositionally biased stretch (acidic residues) spans 1522 to 1532 (DEDESGTEESD). Over residues 1537 to 1561 (LKDDKDRKAEGKVERVPKSPEHSAE) the composition is skewed to basic and acidic residues. Residues 1578-1633 (LDKKDSSDSGVRSSESSPNHSLHNEVADDSQLEKANLIELEDDSHSGKRGIPHSLS) form a disordered region. The segment covering 1585–1594 (DSGVRSSESS) has biased composition (low complexity). Phosphoserine occurs at positions 1623 and 1633. Threonine 1679 bears the Phosphothreonine mark. Position 1681 is a phosphoserine (serine 1681). Threonine 1684 bears the Phosphothreonine mark. Positions 1713-1731 (LRPSSSPNPTTIQNENLKS) are enriched in polar residues. The tract at residues 1713–1771 (LRPSSSPNPTTIQNENLKSMTHKRSQRSSYTRLSKDPPELHAAASSESTGFGEERESIL) is disordered. The PDZ-binding motif lies at 1766–1771 (ERESIL).

Found in a complex, at least composed of KIDINS220, MAGI2, NTRK1 and RAPGEF2; the complex is mainly formed at late endosomes in a nerve growth factor (NGF)-dependent manner. Interacts with RAPGEF2; the interaction is strengthened after NGF stimulation. Isoform 2 interacts (via C-terminal domain) with MAGI2 isoform 1 (via PDZ domain). Interacts with NTRK1, NTRK2, NTRK3, ERKL and NGFR. Can form a ternary complex with NGFR and NTRK1 and this complex is affected by the expression levels of KIDINS220/ARMS. An increase in KIDINS220/ARMS expression leads to a decreased association of NGFR and NTRK1. Interacts (via PDZ-binding motif) with SNTA1 and SNTB2 (via PDZ domains). Interacts with EPHA4 and PRKD1. Tyrosine phosphorylated by NTRK1, NTRK2, EPHB2 and EPHA4. Phosphorylation at Ser-918 is induced by phorbol ester treatment. Phosphorylation by NTRK2 is induced by brain-derived neurotrophic factor (BDNF) and neurotrophin-4/5. Phosphorylation by NTRK1 is induced by nerve growth factor (NGF). Abundant in developing and adult neural tissues as well as neuroendocrine cells and dendritic cells. Overexpressed in melanoma and melanoma cell lines.

The protein resides in the membrane. The protein localises to the late endosome. In terms of biological role, promotes a prolonged MAP-kinase signaling by neurotrophins through activation of a Rap1-dependent mechanism. Provides a docking site for the CRKL-C3G complex, resulting in Rap1-dependent sustained ERK activation. May play an important role in regulating postsynaptic signal transduction through the syntrophin-mediated localization of receptor tyrosine kinases such as EPHA4. In cooperation with SNTA1 can enhance EPHA4-induced JAK/STAT activation. Plays a role in nerve growth factor (NGF)-induced recruitment of RAPGEF2 to late endosomes and neurite outgrowth. May play a role in neurotrophin- and ephrin-mediated neuronal outgrowth and in axon guidance during neural development and in neuronal regeneration. Modulates stress-induced apoptosis of melanoma cells via regulation of the MEK/ERK signaling pathway. This is Kinase D-interacting substrate of 220 kDa (KIDINS220) from Homo sapiens (Human).